Reading from the N-terminus, the 1532-residue chain is Multidrug resistance-associated protein 1 (1532 aa).

Residues 1-33 (MALSSFCSSDGSDPLWDWNVTWHTSNPDFTKCF) are Extracellular-facing. N-linked (GlcNAc...) asparagine glycosylation occurs at Asn-19. The helical transmembrane segment at 34-54 (QNTVLTWVPCFYLWSCFPLYF) threads the bilayer. The Cytoplasmic portion of the chain corresponds to 55-74 (LYLSRHDRGYIQMTHLNKAK). Residues 75 to 95 (TALGFFLWIICWADLFYSFWE) form a helical membrane-spanning segment. Topologically, residues 96 to 100 (RSQGM) are extracellular. A helical transmembrane segment spans residues 101 to 121 (LLAPVLLVSPTLLGITMLLAT). At 122 to 133 (FLIQFERRKGVQ) the chain is on the cytoplasmic side. Residues 134-154 (SSGIMLTFWLVALLCALAILR) form a helical membrane-spanning segment. At 155 to 172 (SKIISALKKDAQVDMFRD) the chain is on the extracellular side. A helical transmembrane segment spans residues 173-193 (SAFYLYFTLVFIQLVLSCFSD). The Cytoplasmic segment spans residues 194–317 (SSPLFSETVR…KDRDPSLFKV (124 aa)). Phosphotyrosine is present on Tyr-277. The residue at position 290 (Ser-290) is a Phosphoserine. Residues 318–338 (LYKTFGPYFLMSFLYKALHDL) form a helical membrane-spanning segment. The ABC transmembrane type-1 1 domain maps to 326–609 (FLMSFLYKAL…LPMVISSIVQ (284 aa)). Residues 339–364 (MMFAGPEILELIINFVNDREAPDWQG) are Extracellular-facing. A helical membrane pass occupies residues 365–385 (YLYTALLFVSACLQTLALHQY). The Cytoplasmic portion of the chain corresponds to 386–441 (FHICFVTGMRIKTAVVGAVYRKALVITNSARKSSTVGEIVNLMSVDAQRFMDLATY). The chain crosses the membrane as a helical span at residues 442–462 (INMIWSAPLQVTLALYFLWLN). Residues 463-465 (LGP) are Extracellular-facing. A helical membrane pass occupies residues 466–486 (SVLAGVAVMILMVPFNAVMAM). The Cytoplasmic segment spans residues 487-548 (KTKTYQVAHM…VLKKSAYLAA (62 aa)). The residue at position 504 (Lys-504) is an N6-succinyllysine. Residues 549–569 (VGTFTWVCTPFLVALSTFAVF) traverse the membrane as a helical segment. The Extracellular portion of the chain corresponds to 570 to 591 (VTVDEKNILDAKKAFVSLALFN). Residues 592–612 (ILRFPLNILPMVISSIVQASV) traverse the membrane as a helical segment. The Cytoplasmic portion of the chain corresponds to 613-967 (SLKRLRIFLS…VKLSVYWNYM (355 aa)). Positions 645–869 (ITVKNATFTW…DGAFAEFVRT (225 aa)) constitute an ABC transporter 1 domain. 679 to 686 (GQVGCGKS) is a binding site for ATP. A phosphoserine mark is found at Ser-879, Ser-883, Ser-916, and Ser-931. Residues 968–988 (KAIGLCISFLSIFLFLCNHVS) traverse the membrane as a helical segment. In terms of domain architecture, ABC transmembrane type-1 2 spans 975–1257 (SFLSIFLFLC…LVRMSSEMET (283 aa)). Topologically, residues 989-1026 (ALASNYWLSLWTDDRPAVNGTQENRNFRLSVYGALGIL) are extracellular. Residues 1027–1047 (QGVAVFGYSMAVSIGGIFASR) traverse the membrane as a helical segment. Residues 1048-1090 (RLHLDLLQNVLRSPMSFFERTPSGNLVNRFSKELDTVDSMIPQ) lie on the Cytoplasmic side of the membrane. Residues 1091–1111 (VIKMFMGSLFSVIGAVIIILL) traverse the membrane as a helical segment. Position 1112 (Ala-1112) is a topological domain, extracellular. The chain crosses the membrane as a helical span at residues 1113-1133 (TPIAAVIIPPLGLVYFFVQRF). At 1134-1204 (YVASSRQLKR…VANRWLAVRL (71 aa)) the chain is on the cytoplasmic side. The chain crosses the membrane as a helical span at residues 1205–1225 (ECVGNCIVLFAALFAVISRHS). The Extracellular portion of the chain corresponds to 1226–1227 (LS). Residues 1228 to 1248 (AGLVGLSVSYSLQITAYLNWL) form a helical membrane-spanning segment. Residues 1249–1532 (VRMSSEMETN…YSMAKDAGLV (284 aa)) lie on the Cytoplasmic side of the membrane. The ABC transporter 2 domain maps to 1294–1528 (VEFRDYCLRY…RGVFYSMAKD (235 aa)). 1328–1335 (GRTGAGKS) serves as a coordination point for ATP.

Belongs to the ABC transporter superfamily. ABCC family. Conjugate transporter (TC 3.A.1.208) subfamily. Post-translationally, glycosylated. Skeletal muscle, brain, heart, spleen, lung and kidney.

The protein resides in the cell membrane. The protein localises to the basolateral cell membrane. It carries out the reaction ATP + H2O + xenobioticSide 1 = ADP + phosphate + xenobioticSide 2.. The catalysed reaction is an S-substituted glutathione(in) + ATP + H2O = an S-substituted glutathione(out) + ADP + phosphate + H(+). The enzyme catalyses sphing-4-enine 1-phosphate(in) + ATP + H2O = sphing-4-enine 1-phosphate(out) + ADP + phosphate + H(+). It catalyses the reaction leukotriene C4(in) + ATP + H2O = leukotriene C4(out) + ADP + phosphate + H(+). It carries out the reaction 17beta-estradiol 17-O-(beta-D-glucuronate)(in) + ATP + H2O = 17beta-estradiol 17-O-(beta-D-glucuronate)(out) + ADP + phosphate + H(+). The catalysed reaction is daunorubicin(in) + ATP + H2O = daunorubicin(out) + ADP + phosphate + H(+). The enzyme catalyses vincristine(in) + ATP + H2O = vincristine(out) + ADP + phosphate + H(+). It catalyses the reaction 2',3'-cGAMP(in) + ATP + H2O = 2',3'-cGAMP(out) + ADP + phosphate + H(+). It carries out the reaction S-[(2E,6E,10E)-geranylgeranyl]-L-glutathione(in) + ATP + H2O = S-[(2E,6E,10E)-geranylgeranyl]-L-glutathione(out) + ADP + phosphate + H(+). The catalysed reaction is prostaglandin A2-S-(R)-glutathione(in) + ATP + H2O = prostaglandin A2-S-(R)-glutathione(out) + ADP + phosphate + H(+). The enzyme catalyses prostaglandin A2-S-(S)-glutathione(in) + ATP + H2O = prostaglandin A2-S-(S)-glutathione(out) + ADP + phosphate + H(+). With respect to regulation, MK 571 inhibits sphingosine 1-phosphate and leukotriene C4 export. Its function is as follows. Mediates export of organic anions and drugs from the cytoplasm. Mediates ATP-dependent transport of glutathione and glutathione conjugates, leukotriene C4, estradiol-17-beta-o-glucuronide, methotrexate, antiviral drugs and other xenobiotics. Confers resistance to anticancer drugs by decreasing accumulation of drug in cells, and by mediating ATP- and GSH-dependent drug export. Hydrolyzes ATP with low efficiency. Catalyzes the export of sphingosine 1-phosphate from mast cells independently of their degranulation. Participates in inflammatory response by allowing export of leukotriene C4 from leukotriene C4-synthesizing cells. Exports S-geranylgeranyl-glutathione (GGG) in lymphoid cells and stromal compartments of lymphoid organs. ABCC1 (via extracellular transport) with GGT5 (via GGG catabolism) establish GGG gradients within lymphoid tissues to position P2RY8-positive lymphocytes at germinal centers in lymphoid follicles and restrict their chemotactic transmigration from blood vessels to the bone marrow parenchyma. Mediates basolateral export of GSH-conjugated R- and S-prostaglandin A2 diastereomers in polarized epithelial cells. This Rattus norvegicus (Rat) protein is Multidrug resistance-associated protein 1.